Here is an 879-residue protein sequence, read N- to C-terminus: Leucine--tRNA ligase (879 aa).

The 'HIGH' region signature appears at 45-55; the sequence is PYPSGALHMGH. The short motif at 637–641 is the 'KMSKS' region element; sequence KMSKS. Lys640 is an ATP binding site.

This sequence belongs to the class-I aminoacyl-tRNA synthetase family.

Its subcellular location is the cytoplasm. It carries out the reaction tRNA(Leu) + L-leucine + ATP = L-leucyl-tRNA(Leu) + AMP + diphosphate. This Xylella fastidiosa (strain M12) protein is Leucine--tRNA ligase.